We begin with the raw amino-acid sequence, 438 residues long: Transposon Ty2-F Gag polyprotein (438 aa).

Polar residues-rich tracts occupy residues 1 to 11, 19 to 39, and 49 to 60; these read MESQQLHQNPH, ASVT…SASN, and KVNSQQETTPGT. Disordered regions lie at residues 1-86, 366-397, and 419-438; these read MESQ…GQYQ, VSRT…AKAH, and SSQY…TERI. Residues 295-397 form an RNA-binding region; sequence ENNINVSDRL…SSKPRAAKAH (103 aa). Positions 369 to 381 are enriched in low complexity; it reads TSPNTTNTKVTTR.

In terms of assembly, homotrimer.

It localises to the cytoplasm. Its function is as follows. Capsid protein (CA) is the structural component of the virus-like particle (VLP), forming the shell that encapsulates the retrotransposons dimeric RNA genome. The particles are assembled from trimer-clustered units and there are holes in the capsid shells that allow for the diffusion of macromolecules. CA also has nucleocapsid-like chaperone activity, promoting primer tRNA(i)-Met annealing to the multipartite primer-binding site (PBS), dimerization of Ty2 RNA and initiation of reverse transcription. In Saccharomyces cerevisiae (strain ATCC 204508 / S288c) (Baker's yeast), this protein is Transposon Ty2-F Gag polyprotein (TY2A-F).